The sequence spans 147 residues: Large ribosomal subunit protein uL22 (147 aa).

This sequence belongs to the universal ribosomal protein uL22 family. In terms of assembly, part of the 50S ribosomal subunit.

Functionally, this protein binds specifically to 23S rRNA; its binding is stimulated by other ribosomal proteins, e.g. L4, L17, and L20. It is important during the early stages of 50S assembly. It makes multiple contacts with different domains of the 23S rRNA in the assembled 50S subunit and ribosome. In terms of biological role, the globular domain of the protein is located near the polypeptide exit tunnel on the outside of the subunit, while an extended beta-hairpin is found that lines the wall of the exit tunnel in the center of the 70S ribosome. This Fervidobacterium nodosum (strain ATCC 35602 / DSM 5306 / Rt17-B1) protein is Large ribosomal subunit protein uL22.